Reading from the N-terminus, the 302-residue chain is uncharacterized protein (302 aa).

This is an uncharacterized protein from Haemophilus influenzae (strain ATCC 51907 / DSM 11121 / KW20 / Rd).